We begin with the raw amino-acid sequence, 351 residues long: Muscleblind-like protein 2a (351 aa).

C3H1-type zinc fingers lie at residues 13-41 (WLTL…HPPK), 47-73 (NGRV…HPPA), 177-205 (TDKL…HPSD), and 213-239 (DNTV…HPPA).

It belongs to the muscleblind family. Expressed in fast and slow myotomal muscle, heart, liver, skin, brain and testis.

The protein resides in the nucleus. The protein localises to the cytoplasm. In terms of biological role, involved in pre-mRNA alternative splicing regulation. RNA-binding protein that binds to 5'ACACCC-3' core sequence. This Takifugu rubripes (Japanese pufferfish) protein is Muscleblind-like protein 2a (mbnl2a).